A 238-amino-acid chain; its full sequence is Ribonuclease PH (238 aa).

Phosphate contacts are provided by residues Arg86 and Gly124–Arg126.

Belongs to the RNase PH family. In terms of assembly, homohexameric ring arranged as a trimer of dimers.

The enzyme catalyses tRNA(n+1) + phosphate = tRNA(n) + a ribonucleoside 5'-diphosphate. Phosphorolytic 3'-5' exoribonuclease that plays an important role in tRNA 3'-end maturation. Removes nucleotide residues following the 3'-CCA terminus of tRNAs; can also add nucleotides to the ends of RNA molecules by using nucleoside diphosphates as substrates, but this may not be physiologically important. Probably plays a role in initiation of 16S rRNA degradation (leading to ribosome degradation) during starvation. This is Ribonuclease PH from Nitrosospira multiformis (strain ATCC 25196 / NCIMB 11849 / C 71).